The sequence spans 247 residues: Adenosylcobinamide-GDP ribazoletransferase (247 aa).

5 helical membrane-spanning segments follow: residues 34–54 (IVMF…IFIL), 59–79 (CGIP…TGGF), 113–133 (GGLA…ELAL), 138–158 (MLAA…LLMY), and 194–214 (VLLL…AIFI).

This sequence belongs to the CobS family. Requires Mg(2+) as cofactor.

It is found in the cell inner membrane. The catalysed reaction is alpha-ribazole + adenosylcob(III)inamide-GDP = adenosylcob(III)alamin + GMP + H(+). The enzyme catalyses alpha-ribazole 5'-phosphate + adenosylcob(III)inamide-GDP = adenosylcob(III)alamin 5'-phosphate + GMP + H(+). It functions in the pathway cofactor biosynthesis; adenosylcobalamin biosynthesis; adenosylcobalamin from cob(II)yrinate a,c-diamide: step 7/7. In terms of biological role, joins adenosylcobinamide-GDP and alpha-ribazole to generate adenosylcobalamin (Ado-cobalamin). Also synthesizes adenosylcobalamin 5'-phosphate from adenosylcobinamide-GDP and alpha-ribazole 5'-phosphate. This chain is Adenosylcobinamide-GDP ribazoletransferase, found in Salmonella typhi.